A 1832-amino-acid polypeptide reads, in one-letter code: MAATVYRPATAPIADAPCEGLVCLELEDGSAYQGYSFGAPKSIAGELVFQTGMVGYPESVTDPSYRGQILVITFPLVGNYGVPSRETVDDLLKDLPAHFESNQIHIAGLVTASYAGEDFSHFLATSSLGTWLKEQGIPAMYGVDTRALTKRIREKGSMLGRMLLQKEDLAVSAPSLGVPGDWKPHFETIEWVNPNEKNLVAEVSIKEPKLYKPDEATALKHPSGRNLRILCLDVGMKYNQLRCFIKRGVEVLVCPWDYDFSKEEYDGLFISNGPGDPKVMDTTVEHISAALQKNNTPIFGICLGHQLLARAAGAKTVKLKFGNRGHNIPCTSMVTGKCHITSQNHGYAVDATTLPTGWQELFINANDGSNEGIMHVDRPHFSVQFHPESTPGPRDTEFLFDVFIQTVAKCTTDNTLLQKGVEFPGGTTEENERLHPRVDVKKVLVLGSGGLSIGQAGEFDYSGSQAIKALKEEGIYTVLINPNIATIQTSKGLADKVYFLPVNAEFVRKVIKYEQPDAIYCTFGGQTALSVGIQLKDEFEALGVKVLGTPIDTIITTEDRELFARSMESIGEKCAKSASASSVEEALNAVKDIGYPVIVRAAYALGGLGSGFANNEAELVDLCNKALAASPQVLVERSMKGWKEIEYEVVRDAQDNCITVCNMENFDPLGIHTGDSIVVAPSQTLSDEDYNMLRTTAVNVIRHLGVVGECNIQYALNPFSREYCIIEVNARLSRSSALASKATGYPLAFIAAKLGLGIPLKEIKNTVTKVTCACFEPSLDYVVVKMPRWDLKKFTRVSTQLGSSMKSVGEVMSIGRTFEEAIQKAIRAIDFHNLGFSESKGALMSVDDELQTPSDQRLFAIANAMHAGYTVDRIWELTKIDKWFLSKLKGLSNFAKDMTKLTANDVVGRPDLLLRAKQLGFCDRQLANFWDSNELAIRRMRLEAGITPFVKQIDTVAAEFPAFTNYLYLTYNASEHDVSFEDRGVMVLGSGVYRIGSSVEFDWCSVRAIRTLRESGFKTIMVNYNPETVSTDYDEADKLYFENINLETVLDVYQMEDATGVLGAMGGQTPNNIALPLLRAGVRVLGTSPEMIDTAENRYKFSRMLDRIGVDQPTWKELTSFDEAKAFCQKVSYPVLVRPSYVLSGAAMNTVYSEADLESYLQQAADVSPEHPVVITKYIENAKEIEMDAVAKDGKVVGHFISEHVENAGVHSGDATLILPPQDLEQTTIQRIEEATRKIGAALNVTGPFNIQFIAKDNDIKVIECNVRASRSFPFVSKVMGVDLIEMATKAIMGLPFVEYPAIDRPSGGVGVKVPQFSFSRLSGADPVLGVEMASTGEVASFGVDKYEAYLKALMSTGFKVPKKNILLSIGSYKDKKEMLPSVAKLSQMGYKLFATAGTADFLQEHDIPVQFLEVLAKEDDQKSEYSLTQHLANNMIDLYINLPSNNRYRRPANYISKGYQTRRMAVDYQIPLVTNVKNAKILVEAIARYRDMEIGERDYQTSHTPLQLSGQVNFTLQDSLSRPHSFKKAHVLSVEQYTRADLHLLFTVAEEMRLSVQRGNVMDILKGRMLATLFYEPSTRTSASFEAAMKRLGGEVISIATQHSSVQKGETLQDTLRTLACYADAIVLRHPDETCVDVAKKYSPVPVVNAGNGSREHPTQAFLDLFTVREELGTVQGLTFTFVGDLRYGRPVHSLVYLLRHYSGVKVQLVSPKGLELPTDVRQQLVKAGQLLCESETLTPEILGKTDVLYCTRVQKERFPSEAEYEKVKGSYRIDNQTLKHAKSKMAIMHPLPRNEEIAEEVDFDQRAAYFRQMRYGLYCRMALLALVMSG.

The segment at 2 to 400 is GATase (Glutamine amidotransferase); sequence AATVYRPATA…PGPRDTEFLF (399 aa). Residues S64, G273, and G275 each coordinate L-glutamine. The 186-residue stretch at 228–413 folds into the Glutamine amidotransferase type-1 domain; the sequence is RILCLDVGMK…IQTVAKCTTD (186 aa). The active-site Nucleophile; for GATase activity is C302. L303, Q306, N344, G346, and Y347 together coordinate L-glutamine. Catalysis depends on for GATase activity residues H386 and E388. The segment at 401–442 is linker; that stretch reads DVFIQTVAKCTTDNTLLQKGVEFPGGTTEENERLHPRVDVKK. Residues 443 to 983 form a CPSase A region; that stretch reads VLVLGSGGLS…SEHDVSFEDR (541 aa). The interval 443 to 1484 is CPSase (Carbamoyl phosphate synthase); that stretch reads VLVLGSGGLS…TNVKNAKILV (1042 aa). ATP contacts are provided by R560, R600, G606, G607, R637, M639, E644, G670, I671, H672, Q713, and E727. ATP-grasp domains follow at residues 564–756 and 1102–1293; these read ARSM…KLGL and SRML…KAIM. The Mg(2+) site is built by Q713, E727, and N729. 3 residues coordinate Mn(2+): Q713, E727, and N729. Residues 984 to 1484 form a CPSase B region; the sequence is GVMVLGSGVY…TNVKNAKILV (501 aa). Residues R1138, K1177, I1179, E1184, G1209, V1210, H1211, S1212, Q1252, and E1264 each coordinate ATP. Q1252, E1264, and N1266 together coordinate Mg(2+). Positions 1252, 1264, and 1266 each coordinate Mn(2+). Residues 1359–1507 enclose the MGS-like domain; that stretch reads FKVPKKNILL…RDYQTSHTPL (149 aa). The interval 1485–1528 is linker; the sequence is EAIARYRDMEIGERDYQTSHTPLQLSGQVNFTLQDSLSRPHSFK. Residues 1529–1832 are ATCase (Aspartate transcarbamylase); that stretch reads KAHVLSVEQY…MALLALVMSG (304 aa). Carbamoyl phosphate contacts are provided by R1581 and T1582. K1609 contributes to the L-aspartate binding site. The carbamoyl phosphate site is built by R1630, H1658, and Q1661. L-aspartate-binding residues include R1691 and R1754. Carbamoyl phosphate is bound by residues L1793 and P1794.

The protein in the N-terminal section; belongs to the CarA family. In the central section; belongs to the CarB family. It in the C-terminal section; belongs to the aspartate/ornithine carbamoyltransferase superfamily. ATCase family. It depends on Mg(2+) as a cofactor. Mn(2+) serves as cofactor.

The protein resides in the cytoplasm. It is found in the nucleus. It catalyses the reaction hydrogencarbonate + L-glutamine + 2 ATP + H2O = carbamoyl phosphate + L-glutamate + 2 ADP + phosphate + 2 H(+). It carries out the reaction L-glutamine + H2O = L-glutamate + NH4(+). The enzyme catalyses hydrogencarbonate + NH4(+) + 2 ATP = carbamoyl phosphate + 2 ADP + phosphate + 2 H(+). The catalysed reaction is carbamoyl phosphate + L-aspartate = N-carbamoyl-L-aspartate + phosphate + H(+). It participates in pyrimidine metabolism; UMP biosynthesis via de novo pathway; (S)-dihydroorotate from bicarbonate: step 1/3. Its pathway is pyrimidine metabolism; UMP biosynthesis via de novo pathway; (S)-dihydroorotate from bicarbonate: step 2/3. With respect to regulation, both CPSase and ATCase activities are feedback inhibited by the end product UTP. In terms of biological role, multifunctional protein that encodes the first 2 enzymatic activities of the de novo pyrimidine pathway: carbamoylphosphate synthetase (CPSase; EC 6.3.5.5) and aspartate transcarbamylase (ATCase; EC 2.1.3.2). The CPSase-function is accomplished in 2 steps, by a glutamine-dependent amidotransferase activity (GATase) that binds and cleaves glutamine to produce ammonia, followed by an ammonium-dependent carbamoyl phosphate synthetase, which reacts with the ammonia, hydrogencarbonate and ATP to form carbamoyl phosphate. The endogenously produced carbamoyl phosphate is sequestered and channeled to the ATCase active site. ATCase then catalyzes the formation of carbamoyl-L-aspartate from L-aspartate and carbamoyl phosphate. In Neurospora crassa (strain ATCC 24698 / 74-OR23-1A / CBS 708.71 / DSM 1257 / FGSC 987), this protein is Multifunctional protein pyr-3 (pyr-3).